Here is a 701-residue protein sequence, read N- to C-terminus: Polyribonucleotide nucleotidyltransferase (701 aa).

Aspartate 487 and aspartate 493 together coordinate Mg(2+). The region spanning 554–613 (PTMIAMKIDTDKIRDVIGKGGATIRAICEETKASIDIEDDGSIKIFGETKEAADAAKQRI) is the KH domain. Positions 623–691 (GKIYVGKVER…NRGRIKLSIK (69 aa)) constitute an S1 motif domain.

This sequence belongs to the polyribonucleotide nucleotidyltransferase family. As to quaternary structure, component of the RNA degradosome, which is a multiprotein complex involved in RNA processing and mRNA degradation. Mg(2+) is required as a cofactor.

Its subcellular location is the cytoplasm. The enzyme catalyses RNA(n+1) + phosphate = RNA(n) + a ribonucleoside 5'-diphosphate. Functionally, involved in mRNA degradation. Catalyzes the phosphorolysis of single-stranded polyribonucleotides processively in the 3'- to 5'-direction. This is Polyribonucleotide nucleotidyltransferase from Pseudomonas putida (Arthrobacter siderocapsulatus).